The primary structure comprises 713 residues: TWiK family of potassium channels protein 12 (713 aa).

The Cytoplasmic portion of the chain corresponds to 1–15; the sequence is MTLFKKIQWFCNLIR. Residues 16-36 form a helical membrane-spanning segment; that stretch reads LRSYYKFLLLIAYTAFGAWLF. 3 N-linked (GlcNAc...) asparagine glycosylation sites follow: asparagine 53, asparagine 77, and asparagine 98. The segment at residues 112–132 is an intramembrane region (pore-forming); sequence WTWTGAMFYAGQLYTTIGYGY. The helical transmembrane segment at 142 to 162 threads the bilayer; it reads ICTIFYALFGIPCFLMYLKIE. The Cytoplasmic portion of the chain corresponds to 163-242; it reads NAIEWKKDKQ…AEERKKKPFP (80 aa). The chain crosses the membrane as a helical span at residues 243–263; sequence IPIAIIMLIIWICFSASMFCI. An intramembrane region (pore-forming) is located at residues 267–287; it reads TWVFSSAVYFFIVSISTVGLG. The helical transmembrane segment at 298–318 threads the bilayer; it reads VFNFLLILVGLALLSMCFELI. The Cytoplasmic segment spans residues 319–713; it reads TDRVAKWKQK…LSKRDASTMA (395 aa).

Belongs to the two pore domain potassium channel (TC 1.A.1.8) family.

It is found in the membrane. This chain is TWiK family of potassium channels protein 12 (twk-12), found in Caenorhabditis elegans.